We begin with the raw amino-acid sequence, 450 residues long: MSSLSQAASSVEKRTNARYWIVVMLFIVTSFNYGDRATLSIAGSEMAKDIGLDPVGMGYVFSAFSWAYVIGQIPGGWLLDRFGSKRVYFWSIFIWSMFTLLQGFVDIFSGFGIIVALFTLRFLVGLAEAPSFPGNSRIVAAWFPAQERGTAVSIFNSAQYFATVIFAPIMGWLTHEVGWSHVFFFMGGLGIVISFIWLKVIHEPNQHPGVNKKELEYIAAGGALINMDQQNTKVKVPFSVKWGQIKQLLGSRMMIGVYIGQYCINALTYFFITWFPVYLVQARGMSILKAGFVASVPAVCGFIGGVLGGIISDWLMRRTGSLNIARKTPIVMGMLLSMVMVFCNYVNVEWMIIGFMALAFFGKGIGALGWAVMADTAPKEISGLSGGLFNMFGNISGIVTPIAIGYIVGTTGSFNGALIYVGVHALIAVLSYLVLVGDIKRIELKPVAGQ.

Topologically, residues M1 to W20 are cytoplasmic. Residues I21–I41 traverse the membrane as a helical segment. Residues A42 to G58 lie on the Periplasmic side of the membrane. Residues Y59 to L79 traverse the membrane as a helical segment. The Cytoplasmic portion of the chain corresponds to D80 to K85. The helical transmembrane segment at R86–V105 threads the bilayer. Topologically, residues D106 to S109 are periplasmic. Residues G110–F132 form a helical membrane-spanning segment. Residues P133–S153 are Cytoplasmic-facing. A helical membrane pass occupies residues I154–T174. The Periplasmic segment spans residues H175 to E176. The chain crosses the membrane as a helical span at residues V177–W197. Residues L198–M254 are Cytoplasmic-facing. A helical transmembrane segment spans residues I255–F275. Over P276–A290 the chain is Periplasmic. Residues G291–I311 traverse the membrane as a helical segment. Topologically, residues S312–P329 are cytoplasmic. A helical membrane pass occupies residues I330 to W350. Residue M351 is a topological domain, periplasmic. The chain crosses the membrane as a helical span at residues I352–V372. Over M373–G387 the chain is Cytoplasmic. A helical transmembrane segment spans residues L388–V408. The Periplasmic segment spans residues G409–N415. A helical membrane pass occupies residues G416–V436. At G437–Q450 the chain is on the cytoplasmic side.

It belongs to the major facilitator superfamily. Phthalate permease family.

The protein resides in the cell inner membrane. It catalyses the reaction galactarate(in) + H(+)(in) = galactarate(out) + H(+)(out). The enzyme catalyses D-glucarate(in) + H(+)(in) = D-glucarate(out) + H(+)(out). It carries out the reaction (R)-glycerate(in) + H(+)(in) = (R)-glycerate(out) + H(+)(out). Probably involved in the uptake of galactarate and/or D-glucarate. May also transport D-glycerate. This Escherichia coli (strain K12) protein is Probable galactarate/D-glucarate transporter GudP.